Here is a 414-residue protein sequence, read N- to C-terminus: Tyrosine--tRNA ligase (414 aa).

Tyr35 contributes to the L-tyrosine binding site. A 'HIGH' region motif is present at residues 40-49; the sequence is PTADSLHVGH. Residues Tyr164 and Gln168 each coordinate L-tyrosine. The 'KMSKS' region signature appears at 226 to 230; the sequence is KFGKT. Residue Lys229 coordinates ATP. The S4 RNA-binding domain occupies 347–414; it reads TKVIDALVEL…KKKYFVILVK (68 aa).

This sequence belongs to the class-I aminoacyl-tRNA synthetase family. TyrS type 1 subfamily. In terms of assembly, homodimer.

The protein resides in the cytoplasm. The enzyme catalyses tRNA(Tyr) + L-tyrosine + ATP = L-tyrosyl-tRNA(Tyr) + AMP + diphosphate + H(+). In terms of biological role, catalyzes the attachment of tyrosine to tRNA(Tyr) in a two-step reaction: tyrosine is first activated by ATP to form Tyr-AMP and then transferred to the acceptor end of tRNA(Tyr). This is Tyrosine--tRNA ligase from Mycoplasma capricolum subsp. capricolum (strain California kid / ATCC 27343 / NCTC 10154).